We begin with the raw amino-acid sequence, 326 residues long: Delta-aminolevulinic acid dehydratase (326 aa).

The Zn(2+) site is built by cysteine 125, cysteine 127, and cysteine 135. Lysine 200 acts as the Schiff-base intermediate with substrate in catalysis. The 5-aminolevulinate site is built by arginine 210 and arginine 222. Glutamate 238 contacts Mg(2+). Lysine 253 serves as the catalytic Schiff-base intermediate with substrate. Residue serine 279 participates in 5-aminolevulinate binding.

Belongs to the ALAD family. Homooctamer. Zn(2+) serves as cofactor.

It carries out the reaction 2 5-aminolevulinate = porphobilinogen + 2 H2O + H(+). Its pathway is porphyrin-containing compound metabolism; protoporphyrin-IX biosynthesis; coproporphyrinogen-III from 5-aminolevulinate: step 1/4. In terms of biological role, catalyzes an early step in the biosynthesis of tetrapyrroles. Binds two molecules of 5-aminolevulinate per subunit, each at a distinct site, and catalyzes their condensation to form porphobilinogen. The protein is Delta-aminolevulinic acid dehydratase (hemB) of Methanothermobacter thermautotrophicus (strain ATCC 29096 / DSM 1053 / JCM 10044 / NBRC 100330 / Delta H) (Methanobacterium thermoautotrophicum).